The chain runs to 276 residues: Putative inactive ferrous iron permease EfeU (276 aa).

M1 is a topological domain (periplasmic). A helical membrane pass occupies residues 2 to 22 (FVPFLIMLREGLEAALIVSLI). Topologically, residues 23 to 35 (ASYLKRTQRGMXD) are cytoplasmic. Residues 36–56 (CVMWIGVLLAAALCLGLGIFI) traverse the membrane as a helical segment. The Periplasmic portion of the chain corresponds to 57-69 (NETTGEFPQKEQE). Residues 70-90 (LFEGIVAVIAVVILTWMVFWM) form a helical membrane-spanning segment. Residues 91 to 118 (RKVSRNVKVQLEQAVDSALQRGNHHGWA) lie on the Cytoplasmic side of the membrane. The chain crosses the membrane as a helical span at residues 119–139 (LVMMVFFAVAREGLESVFFLL). The Periplasmic portion of the chain corresponds to 140 to 147 (AAFQQDVG). The chain crosses the membrane as a helical span at residues 148 to 168 (IWPPLGAMLGLATAVVLGFLL). Residues 169–179 (YWGGIRLNLGA) are Cytoplasmic-facing. Residues 180-200 (FFKWTSLFILFVAAGLAAGAI) traverse the membrane as a helical segment. Over 201–244 (RAFHEAGLWNHFQEIAFDMSAVLSTHSLFGTLMEGIFGYQEAPS) the chain is Periplasmic. The chain crosses the membrane as a helical span at residues 245 to 265 (VSEVAVWFIYLIPALVAFALP). The Cytoplasmic segment spans residues 266–276 (PRAGATASRSA).

Belongs to the oxidase-dependent Fe transporter (OFeT) (TC 9.A.10.1) family. In terms of assembly, part of a ferrous iron transporter composed of EfeU, EfeO and EfeB. However, this EfeUOB tripartite iron transporter is defective in E.coli strain K12 due to a frameshift mutation in EfeU.

It is found in the cell inner membrane. The chain is Putative inactive ferrous iron permease EfeU (efeU) from Escherichia coli (strain K12).